Consider the following 578-residue polypeptide: Proline--tRNA ligase (578 aa).

The protein belongs to the class-II aminoacyl-tRNA synthetase family. ProS type 1 subfamily. As to quaternary structure, homodimer.

The protein resides in the cytoplasm. The enzyme catalyses tRNA(Pro) + L-proline + ATP = L-prolyl-tRNA(Pro) + AMP + diphosphate. Catalyzes the attachment of proline to tRNA(Pro) in a two-step reaction: proline is first activated by ATP to form Pro-AMP and then transferred to the acceptor end of tRNA(Pro). As ProRS can inadvertently accommodate and process non-cognate amino acids such as alanine and cysteine, to avoid such errors it has two additional distinct editing activities against alanine. One activity is designated as 'pretransfer' editing and involves the tRNA(Pro)-independent hydrolysis of activated Ala-AMP. The other activity is designated 'posttransfer' editing and involves deacylation of mischarged Ala-tRNA(Pro). The misacylated Cys-tRNA(Pro) is not edited by ProRS. This is Proline--tRNA ligase from Brachyspira hyodysenteriae (strain ATCC 49526 / WA1).